Here is a 92-residue protein sequence, read N- to C-terminus: Probable Fe(2+)-trafficking protein (92 aa).

This sequence belongs to the Fe(2+)-trafficking protein family.

Could be a mediator in iron transactions between iron acquisition and iron-requiring processes, such as synthesis and/or repair of Fe-S clusters in biosynthetic enzymes. The sequence is that of Probable Fe(2+)-trafficking protein from Shewanella baltica (strain OS223).